A 604-amino-acid polypeptide reads, in one-letter code: MHLLCFFFLLLWTGPARSYFPEERWSPESALLAPRVLVALVCRNSAHSLPHVLGAIDRLNYPKDRMAVWVATDHNSDNTTEILREWLVNVQNFYHYVEWRPQDEPSVYEGESGPKHWTNLRYEHVMKLRQAALETAREMWADYFMLVDCDNLLTNRDVLWKLMRENKTIVAPMLESRAAYSNFWCGMTSQGYYKRTPAYMPIRRQERKGCFAVPMVHSTLLLDLRKEASRQLAFFPPHPDYTWAFDDIIIFAFSARMAEVQMYICNRETYGYFPVPLRSQNSLQDEAESFLHSQLEVMVRNPPIEPSVYLSLMPKQTDKMGFDEVFMINLLRRSDRRERMLRTLYEQEIACKIITAVDGKALNASQVEALGIKMLPGYSDPYHGRPLTKGELGCFLSHYNIWNEIVDRGLQSSLVIEDDLRFEVFFKRRLQNLMQEVQSQQLDWDLIYIGRKRMQVERPEKSVPRIHSLVEADYSYWTLGYVISLRGAQKLLRAEPLKKMLPVDEFLPVMYNKHPIEEYMSHFPQRDLRAFSAEPLLIYPTHYTGDQGYISDTETSSVWDNESVLTDWDRARSRKSREQEELSSEAQNTDVLQSPLDSTARDEL.

Positions 1–18 (MHLLCFFFLLLWTGPARS) are cleaved as a signal peptide. 4 N-linked (GlcNAc...) asparagine glycosylation sites follow: N78, N166, N363, and N561. The segment covering 570 to 580 (RARSRKSREQE) has biased composition (basic and acidic residues). The tract at residues 570–604 (RARSRKSREQEELSSEAQNTDVLQSPLDSTARDEL) is disordered. Polar residues predominate over residues 584 to 597 (SEAQNTDVLQSPLD). Positions 601–604 (RDEL) match the Prevents secretion from ER motif.

Belongs to the glycosyltransferase 25 family.

It is found in the endoplasmic reticulum lumen. The enzyme catalyses (5R)-5-hydroxy-L-lysyl-[collagen] + UDP-alpha-D-galactose = (5R)-5-O-(beta-D-galactosyl)-5-hydroxy-L-lysyl-[collagen] + UDP + H(+). Beta-galactosyltransferase that transfers beta-galactose to hydroxylysine residues of type I collagen. By acting on collagen glycosylation, facilitates the formation of collagen triple helix. This is Procollagen galactosyltransferase 1 (colgalt1) from Danio rerio (Zebrafish).